Reading from the N-terminus, the 117-residue chain is Succinate dehydrogenase hydrophobic membrane anchor subunit (117 aa).

Residues 1 to 15 lie on the Cytoplasmic side of the membrane; sequence MVEMESAKSVLEPLA. The chain crosses the membrane as a helical span at residues 16-36; it reads WLMQMITGLLMILLVTAHFYV. Over 37-61 the chain is Extracellular; the sequence is THMTTHDALRYAEVVERVAQPEFKA. Residues 62-82 traverse the membrane as a helical segment; that stretch reads LYALLLLAVSFHAFNGLRAIL. Residue histidine 73 coordinates heme. At 83 to 92 the chain is on the cytoplasmic side; sequence LDTNAGMRKK. The helical transmembrane segment at 93–115 threads the bilayer; the sequence is GAVSALTTLAFLLAFFYGLYLLF.

In terms of assembly, part of an enzyme complex containing four subunits: a flavoprotein, an iron-sulfur protein, plus two membrane-anchoring proteins, SdhC and SdhD. Heme serves as cofactor.

The protein localises to the cell membrane. The protein operates within carbohydrate metabolism; tricarboxylic acid cycle. Its function is as follows. Membrane-anchoring subunit of succinate dehydrogenase (SDH). The sequence is that of Succinate dehydrogenase hydrophobic membrane anchor subunit (sdhD) from Archaeoglobus fulgidus (strain ATCC 49558 / DSM 4304 / JCM 9628 / NBRC 100126 / VC-16).